A 149-amino-acid chain; its full sequence is Large ribosomal subunit protein bL9 (149 aa).

Belongs to the bacterial ribosomal protein bL9 family.

Its function is as follows. Binds to the 23S rRNA. In Buchnera aphidicola subsp. Cinara cedri (strain Cc), this protein is Large ribosomal subunit protein bL9.